The chain runs to 143 residues: FAD synthase (143 aa).

ATP contacts are provided by residues 9 to 10 (TF), 14 to 17 (HPGH), and aspartate 92.

Belongs to the archaeal FAD synthase family. As to quaternary structure, homodimer. A divalent metal cation serves as cofactor.

The enzyme catalyses FMN + ATP + H(+) = FAD + diphosphate. It functions in the pathway cofactor biosynthesis; FAD biosynthesis; FAD from FMN: step 1/1. Its function is as follows. Catalyzes the transfer of the AMP portion of ATP to flavin mononucleotide (FMN) to produce flavin adenine dinucleotide (FAD) coenzyme. The polypeptide is FAD synthase (Methanococcoides burtonii (strain DSM 6242 / NBRC 107633 / OCM 468 / ACE-M)).